Reading from the N-terminus, the 493-residue chain is Protein translocase subunit SecY (493 aa).

The Cytoplasmic portion of the chain corresponds to 1–21 (MDSVIRALQPYFERIPSVERP). A helical transmembrane segment spans residues 22–48 (KGHVHFREKFGWTAAILLLYFILSNVP). Residues 49–59 (VFGLSPESIDI) lie on the Extracellular side of the membrane. Residues 60–67 (FAAYRALF) constitute an intramembrane region (helical). The discontinuously helical transmembrane segment at 60-88 (FAAYRALFAGSTGSIIALGIGPIVTASII) threads the bilayer. Residues 68–79 (AGSTGSIIALGI) lie within the membrane without spanning it. The segment at residues 80 to 88 (GPIVTASII) is an intramembrane region (helical). At 89 to 109 (LQLLVGAGIIKLDLTNPEDRA) the chain is on the cytoplasmic side. A helical membrane pass occupies residues 110–134 (AYQDFQRFLVFVMIAVEAIPQIAGG). Residues 135–151 (LLKPDLNLAAQLGVSPG) lie on the Extracellular side of the membrane. Residues 152–176 (IISFLIFIQLFIGGVLIVYMDEVVS) traverse the membrane as a helical segment. Over 177-182 (KWGIGS) the chain is Cytoplasmic. A helical membrane pass occupies residues 183–201 (GVSLFILAGIAQSIVVGLF). At 202 to 244 (NWVIPPNSAMPAGIIPRWIWIAQNYPLDQLFTGSGLAFLLIQG) the chain is on the extracellular side. A helical transmembrane segment spans residues 245-266 (GILALITTAAIILLVVFFEGTR). Residues 267-291 (VEIPLAHAVARGARGRFPIKLIYAS) are Cytoplasmic-facing. A helical transmembrane segment spans residues 292–313 (VLPMIFVRALQANVVALGQVLH). At 314-367 (ARGVTIFGEFVNGKAVSGLMFFLQPVSSPYDWIPSLVKSQGAAFAAIPDWMIYL) the chain is on the extracellular side. The helical transmembrane segment at 368–387 (HLLIDALILVVGGIIFAWFW) threads the bilayer. Residues 388–430 (VETSGMDARTVASQIAKSGMQVPGFRKSPQVLERVLSRYIPKV) lie on the Cytoplasmic side of the membrane. A helical membrane pass occupies residues 431–449 (TILGGAIIGILTLVANMLG). Residues 450–454 (TIGNV) lie on the Extracellular side of the membrane. Residues 455-469 (SGTGLLLAVSIAYRF) traverse the membrane as a helical segment. Residues 470-493 (YEDLAKEQLTEMHPLIRRMLGEEA) are Cytoplasmic-facing.

Belongs to the SecY/SEC61-alpha family. Component of the Sec protein translocase complex. Heterotrimer consisting of alpha (SecY), beta (SecG) and gamma (SecE) subunits. The heterotrimers can form oligomers, although 1 heterotrimer is thought to be able to translocate proteins. Interacts with the ribosome. May interact with SecDF, and other proteins may be involved.

The protein localises to the cell membrane. The central subunit of the protein translocation channel SecYEG. Consists of two halves formed by TMs 1-5 and 6-10. These two domains form a lateral gate at the front which open onto the bilayer between TMs 2 and 7, and are clamped together by SecE at the back. The channel is closed by both a pore ring composed of hydrophobic SecY resides and a short helix (helix 2A) on the extracellular side of the membrane which forms a plug. The plug probably moves laterally to allow the channel to open. The ring and the pore may move independently. This chain is Protein translocase subunit SecY, found in Archaeoglobus fulgidus (strain ATCC 49558 / DSM 4304 / JCM 9628 / NBRC 100126 / VC-16).